The chain runs to 164 residues: MAKKNAKKSKNSSASIARNKRATFDYKFEEKMEAGLSLMGWEVKSIRMGKVNLSESYVFMRDGEAFLFGCTIAPLNTASTHVVCDPMRSRKLLLKRKELDKLQGLVDRKGYSIVPISMYWQKGAWVKIEIGLGKGKKEHDKRDDTKDREWQIEKARTMKKAVQQ.

This sequence belongs to the SmpB family.

Its subcellular location is the cytoplasm. Required for rescue of stalled ribosomes mediated by trans-translation. Binds to transfer-messenger RNA (tmRNA), required for stable association of tmRNA with ribosomes. tmRNA and SmpB together mimic tRNA shape, replacing the anticodon stem-loop with SmpB. tmRNA is encoded by the ssrA gene; the 2 termini fold to resemble tRNA(Ala) and it encodes a 'tag peptide', a short internal open reading frame. During trans-translation Ala-aminoacylated tmRNA acts like a tRNA, entering the A-site of stalled ribosomes, displacing the stalled mRNA. The ribosome then switches to translate the ORF on the tmRNA; the nascent peptide is terminated with the 'tag peptide' encoded by the tmRNA and targeted for degradation. The ribosome is freed to recommence translation, which seems to be the essential function of trans-translation. This chain is SsrA-binding protein, found in Shewanella sediminis (strain HAW-EB3).